The sequence spans 590 residues: Auxin response factor 20 (590 aa).

The TF-B3 DNA-binding region spans 126–224 (FTKVLTASDT…ELRVGIRRAR (99 aa)). One can recognise a PB1 domain in the interval 495 to 576 (RTCTKVQMQG…MVKKILIYSK (82 aa)).

The protein belongs to the ARF family. In terms of assembly, homodimers and heterodimers.

It is found in the nucleus. Auxin response factors (ARFs) are transcriptional factors that bind specifically to the DNA sequence 5'-TGTCTC-3' found in the auxin-responsive promoter elements (AuxREs). Could act as transcriptional activator or repressor. Formation of heterodimers with Aux/IAA proteins may alter their ability to modulate early auxin response genes expression. In Arabidopsis thaliana (Mouse-ear cress), this protein is Auxin response factor 20 (ARF20).